The sequence spans 332 residues: Cilia- and flagella-associated protein 119 (332 aa).

Polar residues predominate over residues 1-10 (MITPRSSQSL). Disordered regions lie at residues 1 to 70 (MITP…ANLF), 246 to 271 (EDEE…EAEQ), and 308 to 332 (RLSN…SKAK). Basic and acidic residues predominate over residues 14–30 (VQTELEHSPKLQEEPDR). Residues 49 to 58 (ESPAEATSSP) show a composition bias toward polar residues. A coiled-coil region spans residues 287–308 (LNKELRQLQQLVEERLKESEER).

In terms of tissue distribution, specifically expressed in testis (at protein level).

The protein localises to the cell projection. It localises to the cilium. It is found in the flagellum. Its subcellular location is the cytoplasmic vesicle. The protein resides in the secretory vesicle. The protein localises to the acrosome. It localises to the cytoplasm. The sequence is that of Cilia- and flagella-associated protein 119 from Rattus norvegicus (Rat).